The primary structure comprises 465 residues: MGCCYSLSSTVDPVQDHTTDASSEPRNGGGEDPPLTKFSFSALKTATNHFSPENIVSDQTSDVVFKGRLQNGGFVAIKRFNNMAWSDPKLFLEEAQRVGKLRHKRLVNLIGYCCDGDKRFLVADFMANDTLAKRLFQRKYQTMDWSIRLRVAYFVAEALDYCNTAGFASYNNLSAYKVLFDEDGDACLSCFGLMKEINNDQITTGSVNPENVIYRFGTVLVNLLSGKQIPPSHAPEMIHRKNVFKLMDPYLKGKFSIDEANVVYKLASQCLKYEGQESPNTKEIVATLETLQTRTEAPSYEVVEMTNQEKDASSSSNLSPLGEACLRMDLASIHSILVLAGYDDDKDIIELSFEEWIQEVKELQDVRRNGDRAFVEQDFKTAIACYSQFVEERSLVYPSVYARRSLSYLFCDEPEKALLDGMHAQGVFPDWPTAFYLQSVALAKLDMNTDSADTLKEAALLEVKK.

Positions 1–12 (MGCCYSLSSTVD) are enriched in polar residues. The segment at 1–34 (MGCCYSLSSTVDPVQDHTTDASSEPRNGGGEDPP) is disordered. Residue glycine 2 is the site of N-myristoyl glycine attachment. 2 S-palmitoyl cysteine lipidation sites follow: cysteine 3 and cysteine 4. The Protein kinase domain maps to 50–291 (FSPENIVSDQ…KEIVATLETL (242 aa)). Residues 56–64 (VSDQTSDVV) and lysine 78 each bind ATP.

This sequence belongs to the protein kinase superfamily. Ser/Thr protein kinase family. As to quaternary structure, interacts with YDA. Post-translationally, diacylation-mediated membrane association is essential for BSK12 function. Expressed at the mRNA level in the sperm cells in mature pollen, but the protein is only detectable in the zygote and the micropylar endosperm upon fertilization.

The protein localises to the cell membrane. Its function is as follows. Probable inactive protein kinase that activates the YODA MAP kinase cascade, which regulates the asymmetric first division and embryo polarity, by promoting the elongation of the zygote and the development of its basal daughter cell into the extra-embryonic suspensor. Acts as an adapter at the plasma membrane, possibly by recruiting and binding an activator. The polypeptide is Probable inactive receptor-like kinase BSK12 (Arabidopsis thaliana (Mouse-ear cress)).